The chain runs to 398 residues: 1-deoxy-D-xylulose 5-phosphate reductoisomerase (398 aa).

T10, G11, S12, I13, N38, and N124 together coordinate NADPH. K125 provides a ligand contact to 1-deoxy-D-xylulose 5-phosphate. Residue E126 coordinates NADPH. A Mn(2+)-binding site is contributed by D150. 4 residues coordinate 1-deoxy-D-xylulose 5-phosphate: S151, E152, S186, and H209. E152 is a Mn(2+) binding site. G215 serves as a coordination point for NADPH. The 1-deoxy-D-xylulose 5-phosphate site is built by S222, N227, K228, and E231. Residue E231 coordinates Mn(2+).

The protein belongs to the DXR family. The cofactor is Mg(2+). Mn(2+) serves as cofactor.

It carries out the reaction 2-C-methyl-D-erythritol 4-phosphate + NADP(+) = 1-deoxy-D-xylulose 5-phosphate + NADPH + H(+). The protein operates within isoprenoid biosynthesis; isopentenyl diphosphate biosynthesis via DXP pathway; isopentenyl diphosphate from 1-deoxy-D-xylulose 5-phosphate: step 1/6. Its function is as follows. Catalyzes the NADPH-dependent rearrangement and reduction of 1-deoxy-D-xylulose-5-phosphate (DXP) to 2-C-methyl-D-erythritol 4-phosphate (MEP). In Baumannia cicadellinicola subsp. Homalodisca coagulata, this protein is 1-deoxy-D-xylulose 5-phosphate reductoisomerase.